The following is a 1345-amino-acid chain: CRISPR-associated endonuclease Cas9 (1345 aa).

Catalysis depends on Asp10, which acts as the For RuvC-like nuclease domain. Mg(2+) contacts are provided by Asp10, Glu762, and Glu766. Positions 770 to 921 (TNQGRRNSQQ…DKAGFIKRQL (152 aa)) constitute an HNH Cas9-type domain. Catalysis depends on His840, which acts as the Proton acceptor for HNH nuclease domain. Residue His983 participates in Mg(2+) binding.

The protein belongs to the CRISPR-associated protein Cas9 family. Subtype II-A subfamily. Monomer. Binds crRNA and tracrRNA. Mg(2+) is required as a cofactor.

CRISPR (clustered regularly interspaced short palindromic repeat) is an adaptive immune system that provides protection against mobile genetic elements (viruses, transposable elements and conjugative plasmids). CRISPR clusters contain spacers, sequences complementary to antecedent mobile elements, and target invading nucleic acids. CRISPR clusters are transcribed and processed into CRISPR RNA (crRNA). In type II CRISPR systems correct processing of pre-crRNA requires a trans-encoded small RNA (tracrRNA), endogenous ribonuclease 3 (rnc) and this protein. The tracrRNA serves as a guide for ribonuclease 3-aided processing of pre-crRNA. Subsequently Cas9/crRNA/tracrRNA endonucleolytically cleaves linear or circular dsDNA target complementary to the spacer; Cas9 is inactive in the absence of the 2 guide RNAs (gRNA). Cas9 recognizes the protospacer adjacent motif (PAM) in the CRISPR repeat sequences to help distinguish self versus nonself, as targets within the bacterial CRISPR locus do not have PAMs. PAM recognition is also required for catalytic activity. Complements the gRNA coprocessing defect in a cas9 deletion in S.pyogenes strain 370 and cuts target plasmid in Cas9:gRNAs mixing experiments with S.thermophilus CRISPR3 from strain LMD-9. The chain is CRISPR-associated endonuclease Cas9 from Streptococcus mutans serotype c (strain ATCC 700610 / UA159).